The sequence spans 101 residues: Acylphosphatase (101 aa).

Positions 13–101 (RARILVRGVV…GEFRGFEIRY (89 aa)) constitute an Acylphosphatase-like domain. Residues R28 and N46 contribute to the active site.

The protein belongs to the acylphosphatase family.

It carries out the reaction an acyl phosphate + H2O = a carboxylate + phosphate + H(+). In Aeropyrum pernix (strain ATCC 700893 / DSM 11879 / JCM 9820 / NBRC 100138 / K1), this protein is Acylphosphatase (acyP).